The chain runs to 427 residues: UPF0229 protein bll6755 (427 aa).

The tract at residues 86 to 107 (DYLQRSGQGSAKDSGPGEGDSE) is disordered.

It belongs to the UPF0229 family.

This chain is UPF0229 protein bll6755, found in Bradyrhizobium diazoefficiens (strain JCM 10833 / BCRC 13528 / IAM 13628 / NBRC 14792 / USDA 110).